Consider the following 20-residue polypeptide: Equinatoxin-1'' (20 aa).

Residues 3–12 (AVAGAVIEGA) form a plays an important role in the hemolytic activity region. The interval 11-20 (GATLTFNVLQ) is N-terminal region.

It belongs to the actinoporin family. Sea anemone subfamily. In terms of assembly, octamer or nonamer in membranes. Monomer in the soluble state.

The protein localises to the secreted. Its subcellular location is the nematocyst. It localises to the target cell membrane. In terms of biological role, pore-forming protein that forms cations-selective hydrophilic pores of around 1 nm and causes cardiac stimulation and cytolysis. Pore formation is a multi-step process that involves specific recognition of membrane sphingomyelin (but neither cholesterol nor phosphatidylcholine) using aromatic rich region and adjacent phosphocholine (POC) binding site, firm binding to the membrane (mainly driven by hydrophobic interactions) accompanied by the transfer of the N-terminal region to the lipid-water interface and finally pore formation after oligomerization of monomers. Cytolytic effects include red blood cells hemolysis, platelet aggregation and lysis, cytotoxic and cytostatic effects on fibroblasts. Lethality in mammals has been ascribed to severe vasospasm of coronary vessels, cardiac arrhythmia, and inotropic effects. In Actinia equina (Beadlet anemone), this protein is Equinatoxin-1''.